Reading from the N-terminus, the 858-residue chain is MPQKTKNTPMMEQYLSIKAQYKDAFLFYRLGDFYELFYEDAINAAQILELTLTSRNRNADDPIPMCGVPYHAAQGYIDTLIEQGYKVAICEQVEDPKTTKGMVKREVVQLVTPGTVMNSKGLEAKDNNYLTAVLTDGNQFGFAYVDLSTGELKTAVLADEEGVLNEASALQTKEMVLGSGIPESLKENLSLRLNIIFSTQETVEENAEFSFLTNELINPLEIEITGKLLSYLSVTQKRSLSHIQKAVEYQPDHFLKMDHYSKFNLELSQSIRTGQKKGTLLWLLDETKTAMGGRLLKQWLDRPLIQERQIKARQEMVQSLLNAYFERLDLQAALTNVYDLERLAGRVAFGSVNGRDLIQLRTSLEQVPTIRQLIVGINQGEWDDLLVDLNPVEDLVALIATAINEEAPLQITEGKVIKDGYNDQLDEYRDAMRNGKQWLAELEAKERQETGIKNLKIGYNRVFGYFIEITKSNLANLEEGKYERKQTLANAERFITPELKELERLILEAEEKSVELEYQLFLAVREQVKTNIDRLQTLAKTISAVDVLQSFATISERYQYVRPTLRSNTKNLAIVEGRHPVVEKVLGHQEYIPNSIRMNPETDILLITGPNMSGKSTYMRQLALTVVMAQIGCFVPAESAEMPIFDQIFTRIGASDDLIAGQSTFMVEMMEANQALRHATPNSLILFDELGRGTATYDGMALAQAIIEYIHREVQAKTLFSTHYHELTVLDETLKGLKNIHVGAVEKDGEVVFLHKMMEGPADKSYGIHVAKIAGLPSPLLERAATILSALEAEETTIPISVHHEEVSEVHEETEQLSLFKEVSTEELSVIDTLKKMNLLEMTPLDALNMLHQLQKRI.

ATP is bound at residue 609–616 (GPNMSGKS).

Belongs to the DNA mismatch repair MutS family.

Its function is as follows. This protein is involved in the repair of mismatches in DNA. It is possible that it carries out the mismatch recognition step. This protein has a weak ATPase activity. The sequence is that of DNA mismatch repair protein MutS from Enterococcus faecalis (strain ATCC 700802 / V583).